A 42-amino-acid chain; its full sequence is Beta-defensin 6 (42 aa).

Glutamine 1 bears the Pyrrolidone carboxylic acid mark. Disulfide bonds link cysteine 9–cysteine 38, cysteine 16–cysteine 31, and cysteine 21–cysteine 39.

Belongs to the beta-defensin family. As to expression, neutrophilic granules.

The protein resides in the secreted. Functionally, has bactericidal activity. Active against E.coli ML35 and S.aureus 502A. The sequence is that of Beta-defensin 6 (DEFB6) from Bos taurus (Bovine).